Consider the following 20-residue polypeptide: U27-ctenitoxin-Pn1a (20 aa).

The segment at 1–20 (LAKRADICQPGKTSQRACET) is disordered. Over residues 11–20 (GKTSQRACET) the composition is skewed to polar residues.

Post-translationally, contains 4 disulfide bonds. Expressed by the venom gland.

The protein resides in the secreted. In terms of biological role, has a vascular smooth muscle contracting activity. Causes short-lived contractions of both arterial and venous rabbit vessels. The sequence is that of U27-ctenitoxin-Pn1a from Phoneutria nigriventer (Brazilian armed spider).